Reading from the N-terminus, the 240-residue chain is Fimbriae Y protein (240 aa).

It is found in the fimbrium. This Salmonella typhimurium (strain LT2 / SGSC1412 / ATCC 700720) protein is Fimbriae Y protein (fimY).